The sequence spans 211 residues: Peptidyl-tRNA hydrolase (211 aa).

Y17 contributes to the tRNA binding site. The active-site Proton acceptor is the H22. Residues F79, N81, and N127 each coordinate tRNA.

Belongs to the PTH family. In terms of assembly, monomer.

Its subcellular location is the cytoplasm. It carries out the reaction an N-acyl-L-alpha-aminoacyl-tRNA + H2O = an N-acyl-L-amino acid + a tRNA + H(+). Hydrolyzes ribosome-free peptidyl-tRNAs (with 1 or more amino acids incorporated), which drop off the ribosome during protein synthesis, or as a result of ribosome stalling. Functionally, catalyzes the release of premature peptidyl moieties from peptidyl-tRNA molecules trapped in stalled 50S ribosomal subunits, and thus maintains levels of free tRNAs and 50S ribosomes. This chain is Peptidyl-tRNA hydrolase, found in Solidesulfovibrio magneticus (strain ATCC 700980 / DSM 13731 / RS-1) (Desulfovibrio magneticus).